Consider the following 88-residue polypeptide: Large ribosomal subunit protein bL27 (88 aa).

Residues 1–26 (MAHKKGTGSTRNGRDSNSKRLGVKAY) are disordered.

It belongs to the bacterial ribosomal protein bL27 family.

In Prochlorococcus marinus (strain MIT 9211), this protein is Large ribosomal subunit protein bL27.